Reading from the N-terminus, the 555-residue chain is Potassium-transporting ATPase potassium-binding subunit (555 aa).

10 consecutive transmembrane segments (helical) span residues 2–22, 60–80, 130–150, 173–193, 246–266, 278–298, 374–394, 412–432, 483–503, and 525–545; these read IWVA…PTGI, QYAL…YFIF, IGIT…VMAF, VFLP…VPQT, MSNI…PFTY, ILFV…TTSE, AGFV…GLMV, LIAV…ALAL, LVMF…AASL, and GIFI…MLVL.

It belongs to the KdpA family. The system is composed of three essential subunits: KdpA, KdpB and KdpC.

It localises to the cell membrane. In terms of biological role, part of the high-affinity ATP-driven potassium transport (or Kdp) system, which catalyzes the hydrolysis of ATP coupled with the electrogenic transport of potassium into the cytoplasm. This subunit binds the extracellular potassium ions and delivers the ions to the membrane domain of KdpB through an intramembrane tunnel. The sequence is that of Potassium-transporting ATPase potassium-binding subunit from Bacillus cereus (strain 03BB102).